The primary structure comprises 201 residues: Protease (201 aa).

Active-site residues include histidine 55, aspartate 72, and cysteine 122.

It belongs to the peptidase C5 family. In terms of assembly, interacts with protease cofactor pVI-C; this interaction is necessary for protease activation.

It localises to the virion. Its subcellular location is the host nucleus. The catalysed reaction is Cleaves proteins of the adenovirus and its host cell at two consensus sites: -Yaa-Xaa-Gly-Gly-|-Xaa- and -Yaa-Xaa-Gly-Xaa-|-Gly- (in which Yaa is Met, Ile or Leu, and Xaa is any amino acid).. With respect to regulation, requires DNA and protease cofactor for maximal activation. Inside nascent virions, becomes partially activated by binding to the viral DNA, allowing it to cleave the cofactor that binds to the protease and fully activates it. Actin, like the viral protease cofactor, seems to act as a cofactor in the cleavage of cytokeratin 18 and of actin itself. Cleaves viral precursor proteins (pTP, pIIIa, pVI, pVII, pVIII, and pX) inside newly assembled particles giving rise to mature virions. Protease complexed to its cofactor slides along the viral DNA to specifically locate and cleave the viral precursors. Mature virions have a weakened organization compared to the unmature virions, thereby facilitating subsequent uncoating. Without maturation, the particle lacks infectivity and is unable to uncoat. Late in adenovirus infection, in the cytoplasm, may participate in the cytoskeleton destruction. Cleaves host cell cytoskeletal keratins K7 and K18. In Ovis aries (Sheep), this protein is Protease.